We begin with the raw amino-acid sequence, 375 residues long: MKNKLFIILIIFIILKIVICQNTTPSKLIPQQQQKQKQQQTQPHHHHHHHQQHQQHQQQHQPNQQIKQQQQPQQQQLQQQQKQLEQQQQQQKIQQQQQPQQQLLQQQQHFPNSQNVIKTPPHHTQQRVPHHHGPNGAPHHHGPNGAPHHHGPNGAPHYHSPNAAPHSGHNTQGHVQTNHVNNINKNNINNNNNNNNNNNNNNNNNNNNNINDNKNIRNNIPSPATKDPNPFINNKPKVNSNTPQPFPHPPHNHNLVNGGRPVIHKQIPPHHHIPMGGGNIQSNQHFQGFQPSQVFTGSQPSSNSASPILFNSENPFYKEEYYKHPEKQVERKITPIMVLYILLASTMVIQLFIMVFKQVKHIREINAKTTMESLL.

A signal peptide spans 1 to 20; that stretch reads MKNKLFIILIIFIILKIVIC. The Extracellular segment spans residues 21–335; the sequence is QNTTPSKLIP…EKQVERKITP (315 aa). Low complexity predominate over residues 30-42; that stretch reads PQQQQKQKQQQTQ. Disordered stretches follow at residues 30–74 and 113–253; these read PQQQ…QPQQ and SQNV…PHNH. Residues 43 to 53 show a composition bias toward basic residues; sequence PHHHHHHHQQH. Positions 54 to 74 are enriched in low complexity; that stretch reads QQHQQQHQPNQQIKQQQQPQQ. A compositionally biased stretch (basic residues) spans 120-151; the sequence is PPHHTQQRVPHHHGPNGAPHHHGPNGAPHHHG. The segment covering 168–180 has biased composition (polar residues); it reads GHNTQGHVQTNHV. Over residues 181–220 the composition is skewed to low complexity; sequence NNINKNNINNNNNNNNNNNNNNNNNNNNNINDNKNIRNNI. The chain crosses the membrane as a helical span at residues 336–356; the sequence is IMVLYILLASTMVIQLFIMVF. Over 357-375 the chain is Cytoplasmic; sequence KQVKHIREINAKTTMESLL.

Its subcellular location is the membrane. This is an uncharacterized protein from Dictyostelium discoideum (Social amoeba).